A 225-amino-acid polypeptide reads, in one-letter code: NAD(P)H-quinone oxidoreductase subunit K, chloroplastic (225 aa).

4 residues coordinate [4Fe-4S] cluster: C43, C44, C108, and C139.

This sequence belongs to the complex I 20 kDa subunit family. NDH is composed of at least 16 different subunits, 5 of which are encoded in the nucleus. [4Fe-4S] cluster is required as a cofactor.

Its subcellular location is the plastid. The protein localises to the chloroplast thylakoid membrane. The enzyme catalyses a plastoquinone + NADH + (n+1) H(+)(in) = a plastoquinol + NAD(+) + n H(+)(out). It carries out the reaction a plastoquinone + NADPH + (n+1) H(+)(in) = a plastoquinol + NADP(+) + n H(+)(out). Functionally, NDH shuttles electrons from NAD(P)H:plastoquinone, via FMN and iron-sulfur (Fe-S) centers, to quinones in the photosynthetic chain and possibly in a chloroplast respiratory chain. The immediate electron acceptor for the enzyme in this species is believed to be plastoquinone. Couples the redox reaction to proton translocation, and thus conserves the redox energy in a proton gradient. The sequence is that of NAD(P)H-quinone oxidoreductase subunit K, chloroplastic from Agrostis stolonifera (Creeping bentgrass).